The chain runs to 439 residues: Methylenetetrahydrofolate--tRNA-(uracil-5-)-methyltransferase TrmFO (439 aa).

8 to 13 lines the FAD pocket; the sequence is GAGLAG.

It belongs to the MnmG family. TrmFO subfamily. Requires FAD as cofactor.

Its subcellular location is the cytoplasm. It carries out the reaction uridine(54) in tRNA + (6R)-5,10-methylene-5,6,7,8-tetrahydrofolate + NADH + H(+) = 5-methyluridine(54) in tRNA + (6S)-5,6,7,8-tetrahydrofolate + NAD(+). It catalyses the reaction uridine(54) in tRNA + (6R)-5,10-methylene-5,6,7,8-tetrahydrofolate + NADPH + H(+) = 5-methyluridine(54) in tRNA + (6S)-5,6,7,8-tetrahydrofolate + NADP(+). Functionally, catalyzes the folate-dependent formation of 5-methyl-uridine at position 54 (M-5-U54) in all tRNAs. The protein is Methylenetetrahydrofolate--tRNA-(uracil-5-)-methyltransferase TrmFO of Magnetococcus marinus (strain ATCC BAA-1437 / JCM 17883 / MC-1).